The chain runs to 597 residues: Elongation factor 4 (597 aa).

In terms of domain architecture, tr-type G spans 2–184; the sequence is DHIRNFSIIA…ALVAKVPPPK (183 aa). GTP-binding positions include 14–19 and 131–134; these read DHGKST and NKID.

It belongs to the TRAFAC class translation factor GTPase superfamily. Classic translation factor GTPase family. LepA subfamily.

It is found in the cell inner membrane. It carries out the reaction GTP + H2O = GDP + phosphate + H(+). Functionally, required for accurate and efficient protein synthesis under certain stress conditions. May act as a fidelity factor of the translation reaction, by catalyzing a one-codon backward translocation of tRNAs on improperly translocated ribosomes. Back-translocation proceeds from a post-translocation (POST) complex to a pre-translocation (PRE) complex, thus giving elongation factor G a second chance to translocate the tRNAs correctly. Binds to ribosomes in a GTP-dependent manner. In Paraburkholderia phytofirmans (strain DSM 17436 / LMG 22146 / PsJN) (Burkholderia phytofirmans), this protein is Elongation factor 4.